The sequence spans 224 residues: Orotate phosphoribosyltransferase (224 aa).

Lys-29 contacts 5-phospho-alpha-D-ribose 1-diphosphate. 37–38 (FF) contributes to the orotate binding site. Residues 75 to 76 (YK), Arg-105, Lys-106, Lys-109, His-111, and 130 to 138 (DDVITAGTS) each bind 5-phospho-alpha-D-ribose 1-diphosphate. Orotate is bound by residues Thr-134 and Arg-162.

It belongs to the purine/pyrimidine phosphoribosyltransferase family. PyrE subfamily. As to quaternary structure, homodimer. It depends on Mg(2+) as a cofactor.

The catalysed reaction is orotidine 5'-phosphate + diphosphate = orotate + 5-phospho-alpha-D-ribose 1-diphosphate. The protein operates within pyrimidine metabolism; UMP biosynthesis via de novo pathway; UMP from orotate: step 1/2. Catalyzes the transfer of a ribosyl phosphate group from 5-phosphoribose 1-diphosphate to orotate, leading to the formation of orotidine monophosphate (OMP). This is Orotate phosphoribosyltransferase from Bordetella bronchiseptica (strain ATCC BAA-588 / NCTC 13252 / RB50) (Alcaligenes bronchisepticus).